The following is a 374-amino-acid chain: 2,7-anhydro-N-acetylneuraminate hydratase (374 aa).

Tyrosine 13, phenylalanine 14, aspartate 35, asparagine 38, threonine 70, asparagine 72, histidine 75, glutamate 92, lysine 93, tryptophan 162, and lysine 163 together coordinate NAD(+).

Belongs to the Gfo/Idh/MocA family. Homodimer. The cofactor is NAD(+).

It carries out the reaction N-acetyl-2,7-anhydro-alpha-neuraminate + H2O = N-acetyl-alpha-neuraminate. Its activity is regulated as follows. Neu5Ac is produced in the presence of NAD(+) or NADH, but not in the presence of FAD. Functionally, hydratase involved in the degradation of sialic acids, which are present in the host mucus layer and represent a much-coveted source of nutrients for R.gnavus, a prevalent member of the normal gut microbiota. Catalyzes the reversible conversion of the dehydrated form of N-acetylneuraminate (Neu5Ac), 2,7-anhydro-N-acetylneuraminate (2,7-AN), to Neu5Ac, allowing growth on 2,7-AN produced by the IT-sialidase NanH. Acts through a multistep mechanism involving a keto intermediate and cycling of NADH/NAD(+). This chain is 2,7-anhydro-N-acetylneuraminate hydratase, found in Mediterraneibacter gnavus (strain ATCC 29149 / DSM 114966 / JCM 6515 / VPI C7-9) (Ruminococcus gnavus).